We begin with the raw amino-acid sequence, 234 residues long: 2,3-bisphosphoglycerate-dependent phosphoglycerate mutase (234 aa).

Substrate-binding positions include 8–15 (RHGESVWN), 21–22 (TG), R60, 87–90 (ERHY), K98, 114–115 (RR), and 183–184 (GN). H9 (tele-phosphohistidine intermediate) is an active-site residue. The Proton donor/acceptor role is filled by E87.

Belongs to the phosphoglycerate mutase family. BPG-dependent PGAM subfamily. In terms of assembly, homodimer.

It carries out the reaction (2R)-2-phosphoglycerate = (2R)-3-phosphoglycerate. Its pathway is carbohydrate degradation; glycolysis; pyruvate from D-glyceraldehyde 3-phosphate: step 3/5. Its function is as follows. Catalyzes the interconversion of 2-phosphoglycerate and 3-phosphoglycerate. The polypeptide is 2,3-bisphosphoglycerate-dependent phosphoglycerate mutase (Geobacter sp. (strain M21)).